A 150-amino-acid chain; its full sequence is UPF0102 protein sll0189 (150 aa).

This sequence belongs to the UPF0102 family.

This chain is UPF0102 protein sll0189, found in Synechocystis sp. (strain ATCC 27184 / PCC 6803 / Kazusa).